The primary structure comprises 224 residues: Proteasome subunit beta (224 aa).

A propeptide spans 1-6 (MDVMKG) (removed in mature form; by autocatalysis). The active-site Nucleophile is T7.

The protein belongs to the peptidase T1B family. The 20S proteasome core is composed of 14 alpha and 14 beta subunits that assemble into four stacked heptameric rings, resulting in a barrel-shaped structure. The two inner rings, each composed of seven catalytic beta subunits, are sandwiched by two outer rings, each composed of seven alpha subunits. The catalytic chamber with the active sites is on the inside of the barrel. Has a gated structure, the ends of the cylinder being occluded by the N-termini of the alpha-subunits. Is capped at one or both ends by the proteasome regulatory ATPase, PAN.

It localises to the cytoplasm. The enzyme catalyses Cleavage of peptide bonds with very broad specificity.. Its activity is regulated as follows. The formation of the proteasomal ATPase PAN-20S proteasome complex, via the docking of the C-termini of PAN into the intersubunit pockets in the alpha-rings, triggers opening of the gate for substrate entry. Interconversion between the open-gate and close-gate conformations leads to a dynamic regulation of the 20S proteasome proteolysis activity. Its function is as follows. Component of the proteasome core, a large protease complex with broad specificity involved in protein degradation. The polypeptide is Proteasome subunit beta (Methanocaldococcus sp. (strain FS406-22)).